Reading from the N-terminus, the 221-residue chain is MASTKPLSRFWEWGKNIVCVGRNYADHVKEMRSTVLSEPVLFLKPSTAYAPEGSPVLMPAYCRNLHHEVELGVLLGKRGEAIPEAAAMDYVAGYALCLDMTARDVQEECKKKGLPWTLAKSFTSSCPVSAFVPKEKIPDPHALRLWLKVNGELRQEGKTSSMIFSIPYIISYVSKIITLEEGDLILTGTPKGVGPIKENDEIEAGIDGVVSMRFKVKRSEY.

Residues 1-24 (MASTKPLSRFWEWGKNIVCVGRNY) constitute a mitochondrion transit peptide. Position 22 (Arg22) interacts with oxalate. A Phosphoserine modification is found at Ser37. Glu68, Glu70, and Asp99 together coordinate Mg(2+). Lys110 bears the N6-acetyllysine mark. The residue at position 112 (Lys112) is an N6-succinyllysine. Lys120 is a binding site for oxalate.

It belongs to the FAH family. As to quaternary structure, homodimer. The cofactor is Mg(2+). Mn(2+) serves as cofactor. As to expression, ubiquitous with higher expression in the liver and the kidney (at protein level).

The protein localises to the mitochondrion. It is found in the cytoplasm. The protein resides in the cytosol. The enzyme catalyses oxaloacetate = enol-oxaloacetate. It carries out the reaction oxaloacetate + H(+) = pyruvate + CO2. The catalysed reaction is a 3-acylpyruvate + H2O = a carboxylate + pyruvate + H(+). It catalyses the reaction acetylpyruvate + H2O = acetate + pyruvate + H(+). The enzyme catalyses 3-fumarylpyruvate + H2O = fumarate + pyruvate + H(+). Oxaloacetate decarboxylation is potently and competitively inhibited by oxalate. Its function is as follows. Tautomerase that converts enol-oxaloacetate, a strong inhibitor of succinate dehydrogenase, to the physiological keto form of oxaloacetate. It is thereby required to maximize aerobic respiration efficiency by preventing succinate dehydrogenase inhibition. Also acts as a weak oxaloacetate decarboxylase (ODx), catalyzing the decarboxylation of oxaloacetate (OAA) to pyruvate and CO(2), and as such is likely a regulatory enzyme in the TCA cycle. Also displays acylpyruvase activity, being able to hydrolyze acetylpyruvate and fumarylpyruvate in vitro. The polypeptide is Oxaloacetate tautomerase FAHD1, mitochondrial (Mus musculus (Mouse)).